Here is a 331-residue protein sequence, read N- to C-terminus: Pseudouridylate synthase TRUB2, mitochondrial (331 aa).

A mitochondrion-targeting transit peptide spans 1–10 (MGSAGLSRLH). The active-site Nucleophile is the Asp98. The disordered stretch occupies residues 296–331 (KSLSPGLDTKQLPSPGWSWDSQGPSSTLGLERGAGQ). Residues 314–323 (WDSQGPSSTL) show a composition bias toward polar residues.

It belongs to the pseudouridine synthase TruB family. As to quaternary structure, forms a regulatory protein-RNA complex, consisting of RCC1L, NGRN, RPUSD3, RPUSD4, TRUB2, FASTKD2 and 16S mt-rRNA.

It is found in the mitochondrion matrix. It catalyses the reaction a uridine in mRNA = a pseudouridine in mRNA. The enzyme catalyses uridine(55) in tRNA = pseudouridine(55) in tRNA. Its function is as follows. Minor enzyme contributing to the isomerization of uridine to pseudouridine (pseudouridylation) of specific mitochondrial mRNAs (mt-mRNAs) such as COXI and COXIII mt-mRNAs. As a component of a functional protein-RNA module, consisting of RCC1L, NGRN, RPUSD3, RPUSD4, TRUB2, FASTKD2 and 16S mitochondrial ribosomal RNA (16S mt-rRNA), controls 16S mt-rRNA abundance and is required for intra-mitochondrial translation. Also catalyzes pseudouridylation of some tRNAs, including synthesis of pseudouridine(55) from uracil-55, in the psi GC loop of a subset of tRNAs. The sequence is that of Pseudouridylate synthase TRUB2, mitochondrial from Homo sapiens (Human).